Consider the following 77-residue polypeptide: U8-lycotoxin-Ls1u (77 aa).

The first 20 residues, 1-20, serve as a signal peptide directing secretion; that stretch reads MKLIIFTGLVLFAIVSLIEA. Positions 21–26 are excised as a propeptide; that stretch reads QAENEK.

It belongs to the neurotoxin 19 (CSTX) family. 08 (U8-Lctx) subfamily. In terms of processing, contains 4 disulfide bonds. In terms of tissue distribution, expressed by the venom gland.

The protein localises to the secreted. This Lycosa singoriensis (Wolf spider) protein is U8-lycotoxin-Ls1u.